Here is a 143-residue protein sequence, read N- to C-terminus: Transcriptional regulator MraZ (143 aa).

SpoVT-AbrB domains lie at 5-47 (TYTP…PRSE) and 76-119 (TDEQ…DAQA).

The protein belongs to the MraZ family. Forms oligomers.

It localises to the cytoplasm. Its subcellular location is the nucleoid. This Mycobacterium ulcerans (strain Agy99) protein is Transcriptional regulator MraZ.